A 73-amino-acid polypeptide reads, in one-letter code: UPF0235 protein LBL_1291 (73 aa).

It belongs to the UPF0235 family.

The protein is UPF0235 protein LBL_1291 of Leptospira borgpetersenii serovar Hardjo-bovis (strain L550).